Consider the following 40-residue polypeptide: Photosystem II reaction center protein J (40 aa).

A helical transmembrane segment spans residues 8-28 (IPLWIIGTVAGILVIGLIGIF).

This sequence belongs to the PsbJ family. In terms of assembly, PSII is composed of 1 copy each of membrane proteins PsbA, PsbB, PsbC, PsbD, PsbE, PsbF, PsbH, PsbI, PsbJ, PsbK, PsbL, PsbM, PsbT, PsbX, PsbY, PsbZ, Psb30/Ycf12, at least 3 peripheral proteins of the oxygen-evolving complex and a large number of cofactors. It forms dimeric complexes.

The protein localises to the plastid. It is found in the chloroplast thylakoid membrane. Its function is as follows. One of the components of the core complex of photosystem II (PSII). PSII is a light-driven water:plastoquinone oxidoreductase that uses light energy to abstract electrons from H(2)O, generating O(2) and a proton gradient subsequently used for ATP formation. It consists of a core antenna complex that captures photons, and an electron transfer chain that converts photonic excitation into a charge separation. This is Photosystem II reaction center protein J from Nicotiana sylvestris (Wood tobacco).